The primary structure comprises 576 residues: Proline--tRNA ligase (576 aa).

This sequence belongs to the class-II aminoacyl-tRNA synthetase family. ProS type 1 subfamily. In terms of assembly, homodimer.

It localises to the cytoplasm. The enzyme catalyses tRNA(Pro) + L-proline + ATP = L-prolyl-tRNA(Pro) + AMP + diphosphate. Functionally, catalyzes the attachment of proline to tRNA(Pro) in a two-step reaction: proline is first activated by ATP to form Pro-AMP and then transferred to the acceptor end of tRNA(Pro). As ProRS can inadvertently accommodate and process non-cognate amino acids such as alanine and cysteine, to avoid such errors it has two additional distinct editing activities against alanine. One activity is designated as 'pretransfer' editing and involves the tRNA(Pro)-independent hydrolysis of activated Ala-AMP. The other activity is designated 'posttransfer' editing and involves deacylation of mischarged Ala-tRNA(Pro). The misacylated Cys-tRNA(Pro) is not edited by ProRS. The sequence is that of Proline--tRNA ligase from Thiobacillus denitrificans (strain ATCC 25259 / T1).